We begin with the raw amino-acid sequence, 210 residues long: Probable GTP-binding protein EngB (210 aa).

The 177-residue stretch at 22 to 198 folds into the EngB-type G domain; sequence FLPEYAFIGR…LTYIDEVNQE (177 aa). GTP is bound by residues 30 to 37, 57 to 61, 75 to 78, 142 to 145, and 177 to 179; these read GRSNVGKS, GKTQL, DLPG, TKAD, and TSS. Positions 37 and 59 each coordinate Mg(2+).

Belongs to the TRAFAC class TrmE-Era-EngA-EngB-Septin-like GTPase superfamily. EngB GTPase family. Mg(2+) is required as a cofactor.

Its function is as follows. Necessary for normal cell division and for the maintenance of normal septation. In Flavobacterium johnsoniae (strain ATCC 17061 / DSM 2064 / JCM 8514 / BCRC 14874 / CCUG 350202 / NBRC 14942 / NCIMB 11054 / UW101) (Cytophaga johnsonae), this protein is Probable GTP-binding protein EngB.